A 340-amino-acid chain; its full sequence is MDKTLSQARTRVTISEVAQAAGVSKATVSRYIGGDRQLLADATAQRIEAVIEQLGYRPNRMASALKRGRTRLIGMLLADIRNPYSVAVMHGVETACREHGYSLVVCNTDCDDARERQHLQALQAYNVDGLIVNTLGHHAGELASLAQELPMVLVDRQLAELQTDLVGLDNADAVEQALDHLHACGYRDILAVSEPLDGTSSRQERVAAFQASIARRSGLRGQVLEVSANLPGQLAAFLASAGHGPQALFSCNGVATLEVMRHLHGRGEQLFQQLGLVALDDLDWYPLVGGGITALAQPTERIAAAAVQCLLERLQGSQLPARRLDLRAQLIVRGSTPIRN.

The HTH lacI-type domain maps to 12 to 67; it reads VTISEVAQAAGVSKATVSRYIGGDRQLLADATAQRIEAVIEQLGYRPNRMASALKR. Residues 14 to 33 constitute a DNA-binding region (H-T-H motif); it reads ISEVAQAAGVSKATVSRYIG.

As to quaternary structure, homodimer.

Its activity is regulated as follows. 2-ketogluconate acts as a molecular effector and causes dissociation of PtxS from its target promoter. Glucose negatively affects the molecular binding of PtxS and 2KGA, and gluconic acid inhibits the PtxS-2KGA binding reaction. In terms of biological role, involved in the regulation of 2-ketogluconic acid metabolism via the control of the expression of the kgu operon. Binds directly to a 14-bp palindrome sequence via its conserved HTH motif. This chain is HTH-type transcriptional regulator PtxS, found in Pseudomonas plecoglossicida.